Reading from the N-terminus, the 434-residue chain is MTNFSPREIVSELDRYIIGQKDAKRAVAIALRNRWRRQQLSDELRDEVMPKNILMIGPTGVGKTEISRRLAKLAGAPFVKVEATKFTEVGYVGRDVEQIVRDLVEVGITLVREKKRAEVKAKAHQNAEERVLDALVGTTASPATRDSFRKKLRANELDEKEIEIDIAETGAPGGFEIPGMPGANIGVLNLSEMFGKALGGRTRKVKTTVKDSYELLVNDESDKLLDNEQIQREAMAAAENDGIVFLDEIDKIAARDGGIGAGVSREGVQRDLLPLVEGTTVATKYGPMKTDHILFIASGAFHVSKPSDLLPELQGRLPIRVELRALTKEDFRRILTETEASLIRQYKALLETEGVALDFTEDAIDALAEVAVQLNANVENIGARRLQTVMERVLDDISFNAPDRGGDTLMIDADYVRKHVGDLAANTDLSRYIL.

Residues Ile18, 60 to 65 (GVGKTE), Asp247, Glu312, and Arg384 contribute to the ATP site.

The protein belongs to the ClpX chaperone family. HslU subfamily. As to quaternary structure, a double ring-shaped homohexamer of HslV is capped on each side by a ring-shaped HslU homohexamer. The assembly of the HslU/HslV complex is dependent on binding of ATP.

The protein resides in the cytoplasm. In terms of biological role, ATPase subunit of a proteasome-like degradation complex; this subunit has chaperone activity. The binding of ATP and its subsequent hydrolysis by HslU are essential for unfolding of protein substrates subsequently hydrolyzed by HslV. HslU recognizes the N-terminal part of its protein substrates and unfolds these before they are guided to HslV for hydrolysis. In Sinorhizobium fredii (strain NBRC 101917 / NGR234), this protein is ATP-dependent protease ATPase subunit HslU.